Here is a 508-residue protein sequence, read N- to C-terminus: ATP synthase subunit alpha, chloroplastic (508 aa).

ATP is bound at residue 172-179; the sequence is GDRQTGKT.

It belongs to the ATPase alpha/beta chains family. As to quaternary structure, F-type ATPases have 2 components, CF(1) - the catalytic core - and CF(0) - the membrane proton channel. CF(1) has five subunits: alpha(3), beta(3), gamma(1), delta(1), epsilon(1). CF(0) has four main subunits: a, b, b' and c.

It is found in the plastid. The protein resides in the chloroplast thylakoid membrane. The catalysed reaction is ATP + H2O + 4 H(+)(in) = ADP + phosphate + 5 H(+)(out). Functionally, produces ATP from ADP in the presence of a proton gradient across the membrane. The alpha chain is a regulatory subunit. The chain is ATP synthase subunit alpha, chloroplastic from Angiopteris evecta (Mule's foot fern).